The sequence spans 316 residues: Pantothenate kinase (316 aa).

Residue 95 to 102 (GSVAVGKS) participates in ATP binding.

The protein belongs to the prokaryotic pantothenate kinase family.

The protein localises to the cytoplasm. It catalyses the reaction (R)-pantothenate + ATP = (R)-4'-phosphopantothenate + ADP + H(+). Its pathway is cofactor biosynthesis; coenzyme A biosynthesis; CoA from (R)-pantothenate: step 1/5. The protein is Pantothenate kinase of Cronobacter sakazakii (strain ATCC BAA-894) (Enterobacter sakazakii).